Reading from the N-terminus, the 745-residue chain is Arf-GAP with coiled-coil, ANK repeat and PH domain-containing protein 1 (745 aa).

Residues 1 to 226 (MTVKLDFEEC…RKELGGQLHQ (226 aa)) enclose the BAR domain. The tract at residues 1–382 (MTVKLDFEEC…RGLGQGSGHL (382 aa)) is required for formation of endosomal tubules when overexpressed with PIP5K1C. In terms of domain architecture, PH spans 265–360 (GLVMEGHLFK…WVSAVQSSIA (96 aa)). In terms of domain architecture, Arf-GAP spans 405–527 (GHVAAQVQSV…KFLTKLPEIR (123 aa)). The tract at residues 405–745 (GHVAAQVQSV…SRRSHDLHTL (341 aa)) is required for interaction with GULP1. A C4-type zinc finger spans residues 420-443 (CCDCREPAPEWASINLGVTLCIQC). Tyr-485 is modified (3'-nitrotyrosine). The tract at residues 525 to 567 (EIRGRRGGRGPPRGHPPVPPKPGLIRPKPGSFRSKPEPPSEDL) is prevents interaction with ITGB1 when S-554 is not phosphorylated. The tract at residues 525–569 (EIRGRRGGRGPPRGHPPVPPKPGLIRPKPGSFRSKPEPPSEDLQS) is disordered. Residues 537 to 546 (RGHPPVPPKP) show a composition bias toward pro residues. Ser-555 is modified (phosphoserine; by PKB). ANK repeat units lie at residues 607–640 (ENATPLIQATAAVRVLNSLLACEFLLQNGANVNQ), 644–673 (QGRGPLHHATILGHTGLACLFLKRGADLGV), and 677–707 (EGRDPLTIAVETANADIVTLLRLAKMREADA).

Banana-shaped homodimer laterally assembling into tetramers, the tetramers further pack helically onto the membrane. Interacts with GTP-bound ARF6. Interacts with third cytoplasmic loop of SLC2A4/GLUT4. Interacts with CLTC. Interacts with GULP1. Forms a complex with GDP-bound ARF6 and GULP1. Interacts with ITGB1; required for ITGB1 recycling. In terms of processing, phosphorylation at Ser-555 by PKB is required for interaction with ITGB1, export of ITGB1 from recycling endosomes to the cell surface and ITGB1-dependent cell migration.

It localises to the recycling endosome membrane. With respect to regulation, GAP activity stimulated by phosphatidylinositol 4,5-bisphosphate (PIP2) and phosphatidic acid. Functionally, GTPase-activating protein (GAP) for ADP ribosylation factor 6 (ARF6) required for clathrin-dependent export of proteins from recycling endosomes to trans-Golgi network and cell surface. Required for regulated export of ITGB1 from recycling endosomes to the cell surface and ITGB1-dependent cell migration. This is Arf-GAP with coiled-coil, ANK repeat and PH domain-containing protein 1 (ACAP1) from Bos taurus (Bovine).